Consider the following 107-residue polypeptide: NLWQFGRENQEVMGQHLPFHYLSYGCYCGWGGIEPKCCYVHDCCYGKLDLYTYSKETGDLVCGGDDPCQKQLCECDRVAALCFQDNKDTYDQKPYNAENCQEASEAC.

Intrachain disulfides connect Cys26–Cys100, Cys28–Cys38, Cys37–Cys82, Cys43–Cys107, Cys44–Cys75, and Cys62–Cys73. Positions 27, 29, and 31 each coordinate Ca(2+). The active site involves His41. Residue Asp42 coordinates Ca(2+). Residue Asp76 is part of the active site.

Ca(2+) serves as cofactor. As to expression, expressed by the venom gland.

Its subcellular location is the secreted. The catalysed reaction is a 1,2-diacyl-sn-glycero-3-phosphocholine + H2O = a 1-acyl-sn-glycero-3-phosphocholine + a fatty acid + H(+). In terms of biological role, PLA2 catalyzes the calcium-dependent hydrolysis of the 2-acyl groups in 3-sn-phosphoglycerides. This chain is Acidic phospholipase A2 2, found in Bothrops insularis (Golden lancehead).